Reading from the N-terminus, the 420-residue chain is DNA replication and repair protein RecF (420 aa).

Position 30–37 (30–37) interacts with ATP; sequence GRNGQGKT. Residues 175-214 form a disordered region; it reads RKGGFARKGGFAPLGPPEGRPEGPPEGRTGGSATSGPPSR.

It belongs to the RecF family.

It localises to the cytoplasm. Its function is as follows. The RecF protein is involved in DNA metabolism; it is required for DNA replication and normal SOS inducibility. RecF binds preferentially to single-stranded, linear DNA. It also seems to bind ATP. The chain is DNA replication and repair protein RecF from Nocardioides sp. (strain ATCC BAA-499 / JS614).